Here is a 574-residue protein sequence, read N- to C-terminus: Cyclomaltodextrinase (574 aa).

Ca(2+) is bound by residues asparagine 144, aspartate 146, asparagine 149, aspartate 150, glycine 168, and aspartate 170. Substrate-binding residues include histidine 243 and arginine 323. Catalysis depends on aspartate 325, which acts as the Nucleophile. The Proton donor role is filled by glutamate 354. Residues 420-421 (HD), aspartate 465, and arginine 469 each bind substrate.

Belongs to the glycosyl hydrolase 13 family. In terms of assembly, monomer. The cofactor is Ca(2+).

The catalysed reaction is cyclomaltodextrin + H2O = linear maltodextrin. Hydrolyzes cyclodextrins. Can also act on linear maltodextrins, with the exception of maltose. This chain is Cyclomaltodextrinase, found in Thermoanaerobacter pseudethanolicus (strain ATCC 33223 / 39E) (Clostridium thermohydrosulfuricum).